A 250-amino-acid polypeptide reads, in one-letter code: L-ascorbate peroxidase 1, cytosolic (250 aa).

The Proton acceptor role is filled by H42. Residues 113–137 (VPFHPGREDKPAPPPEGRLPDATKG) form a disordered region. H163 serves as a coordination point for heme b. K(+)-binding residues include T164, T180, N182, and D187.

This sequence belongs to the peroxidase family. Ascorbate peroxidase subfamily. Requires heme b as cofactor.

The protein localises to the cytoplasm. The catalysed reaction is L-ascorbate + H2O2 = L-dehydroascorbate + 2 H2O. Plays a key role in hydrogen peroxide removal. The sequence is that of L-ascorbate peroxidase 1, cytosolic (APX1) from Oryza sativa subsp. indica (Rice).